Here is a 278-residue protein sequence, read N- to C-terminus: PILR alpha-associated neural protein (278 aa).

Positions 1 to 27 are cleaved as a signal peptide; that stretch reads MWSAQLLSQLLPLWPLLLLSVLPPAQG. Residues 25 to 93 form a disordered region; sequence AQGSSHRSPP…PSGFEEGPPS (69 aa). The Extracellular segment spans residues 28–174; it reads SSHRSPPAPA…FGGRGEGVDP (147 aa). O-linked (GalNAc...) threonine glycosylation occurs at T136. Residues 175 to 195 form a helical membrane-spanning segment; the sequence is QLYVTITISIIIVLVATGIIF. Residues 196–278 lie on the Cytoplasmic side of the membrane; that stretch reads KFCWDRSQKR…QLNRIPLVNL (83 aa). The segment at 206-278 is disordered; the sequence is RRPSGQQGAL…QLNRIPLVNL (73 aa). Residues 209-225 are compositionally biased toward polar residues; it reads SGQQGALRQEESQQPLT.

Post-translationally, O-glycosylation at Thr-136 is essential for recognition by PILRA. As to expression, mainly expressed in brain and spinal cord. Weak expression also detected in heart, kidney, spleen and lymph node. Virtually no expression detected in liver and embryo relative to brain.

The protein resides in the membrane. Its function is as follows. Acts as a ligand for PILRA in neuronal tissues, where it may be involved in immune regulation. The polypeptide is PILR alpha-associated neural protein (Pianp) (Mus musculus (Mouse)).